A 126-amino-acid polypeptide reads, in one-letter code: Histone H2B type 1-K (126 aa).

Over residues 1–12 (MPEPAKSAPAPK) the composition is skewed to low complexity. Residues 1 to 36 (MPEPAKSAPAPKKGSKKAVTKAQKKDGKKRKRSRKE) are disordered. Proline 2 bears the N-acetylproline mark. Glutamate 3 is modified (ADP-ribosyl glutamic acid). Residue lysine 6 is modified to N6-(2-hydroxyisobutyryl)lysine; alternate. At lysine 6 the chain carries N6-(beta-hydroxybutyryl)lysine; alternate. An N6-acetyllysine; alternate modification is found at lysine 6. Position 6 is an N6-butyryllysine; alternate (lysine 6). The residue at position 6 (lysine 6) is an N6-crotonyllysine; alternate. Lysine 6 bears the N6-lactoyllysine; alternate mark. A Glycyl lysine isopeptide (Lys-Gly) (interchain with G-Cter in SUMO2); alternate cross-link involves residue lysine 6. Serine 7 carries the post-translational modification ADP-ribosylserine. An N6-(beta-hydroxybutyryl)lysine; alternate modification is found at lysine 12. 2 positions are modified to N6-acetyllysine; alternate: lysine 12 and lysine 13. N6-crotonyllysine; alternate is present on residues lysine 12 and lysine 13. Lysine 12 bears the N6-lactoyllysine; alternate mark. Lysine 13 bears the N6-(2-hydroxyisobutyryl)lysine; alternate mark. Serine 15 carries the phosphoserine; by STK4/MST1 modification. 4 positions are modified to N6-acetyllysine; alternate: lysine 16, lysine 17, lysine 21, and lysine 24. An N6-crotonyllysine; alternate mark is found at lysine 16, lysine 17, lysine 21, and lysine 24. 4 positions are modified to N6-lactoyllysine; alternate: lysine 16, lysine 17, lysine 21, and lysine 24. Lysine 17 carries the post-translational modification N6-glutaryllysine; alternate. Residues lysine 21 and lysine 24 each carry the N6-(2-hydroxyisobutyryl)lysine; alternate modification. Lysine 21 is modified (N6-(beta-hydroxybutyryl)lysine; alternate). Position 21 is an N6-butyryllysine; alternate (lysine 21). Residue lysine 21 forms a Glycyl lysine isopeptide (Lys-Gly) (interchain with G-Cter in SUMO2); alternate linkage. Position 25 is an N6-(2-hydroxyisobutyryl)lysine (lysine 25). Lysine 35 is modified (N6-(2-hydroxyisobutyryl)lysine; alternate). The residue at position 35 (lysine 35) is an N6-(beta-hydroxybutyryl)lysine; alternate. Lysine 35 bears the N6-crotonyllysine; alternate mark. An N6-glutaryllysine; alternate modification is found at lysine 35. N6-succinyllysine; alternate is present on lysine 35. Lysine 35 is covalently cross-linked (Glycyl lysine isopeptide (Lys-Gly) (interchain with G-Cter in ubiquitin); alternate). PolyADP-ribosyl glutamic acid is present on glutamate 36. Serine 37 is modified (phosphoserine; by AMPK). N6-(2-hydroxyisobutyryl)lysine; alternate is present on residues lysine 44, lysine 47, and lysine 58. Lysine 44 is modified (N6-lactoyllysine; alternate). N6-glutaryllysine; alternate occurs at positions 44 and 47. Residue lysine 47 is modified to N6-methyllysine; alternate. Lysine 58 is subject to N6,N6-dimethyllysine; alternate. At arginine 80 the chain carries Dimethylated arginine. Residue lysine 86 is modified to N6-(2-hydroxyisobutyryl)lysine; alternate. The residue at position 86 (lysine 86) is an N6-acetyllysine; alternate. Lysine 86 carries the post-translational modification N6-lactoyllysine; alternate. N6,N6,N6-trimethyllysine; alternate is present on lysine 86. Residues arginine 87 and arginine 93 each carry the omega-N-methylarginine modification. Position 109 is an N6-(2-hydroxyisobutyryl)lysine; alternate (lysine 109). Position 109 is an N6-(beta-hydroxybutyryl)lysine; alternate (lysine 109). Lysine 109 is subject to N6-lactoyllysine; alternate. N6-glutaryllysine; alternate is present on lysine 109. Residue lysine 109 is modified to N6-methyllysine; alternate. Residue serine 113 is glycosylated (O-linked (GlcNAc) serine). A Phosphothreonine modification is found at threonine 116. Lysine 117 and lysine 121 each carry N6-(2-hydroxyisobutyryl)lysine; alternate. Lysine 117 carries the post-translational modification N6-(beta-hydroxybutyryl)lysine; alternate. N6-lactoyllysine; alternate is present on residues lysine 117 and lysine 121. N6-glutaryllysine; alternate is present on residues lysine 117 and lysine 121. Residues lysine 117 and lysine 121 each carry the N6-succinyllysine; alternate modification. N6-methylated lysine; alternate is present on lysine 117. Lysine 121 participates in a covalent cross-link: Glycyl lysine isopeptide (Lys-Gly) (interchain with G-Cter in ubiquitin); alternate.

This sequence belongs to the histone H2B family. In terms of assembly, the nucleosome is a histone octamer containing two molecules each of H2A, H2B, H3 and H4 assembled in one H3-H4 heterotetramer and two H2A-H2B heterodimers. The octamer wraps approximately 147 bp of DNA. In terms of processing, monoubiquitination at Lys-35 (H2BK34Ub) by the MSL1/MSL2 dimer is required for histone H3 'Lys-4' (H3K4me) and 'Lys-79' (H3K79me) methylation and transcription activation at specific gene loci, such as HOXA9 and MEIS1 loci. Similarly, monoubiquitination at Lys-121 (H2BK120Ub) by the RNF20/40 complex gives a specific tag for epigenetic transcriptional activation and is also prerequisite for histone H3 'Lys-4' and 'Lys-79' methylation. It also functions cooperatively with the FACT dimer to stimulate elongation by RNA polymerase II. H2BK120Ub also acts as a regulator of mRNA splicing: deubiquitination by USP49 is required for efficient cotranscriptional splicing of a large set of exons. Post-translationally, phosphorylated on Ser-15 (H2BS14ph) by STK4/MST1 during apoptosis; which facilitates apoptotic chromatin condensation. Also phosphorylated on Ser-15 in response to DNA double strand breaks (DSBs), and in correlation with somatic hypermutation and immunoglobulin class-switch recombination. Phosphorylation at Ser-37 (H2BS36ph) by AMPK in response to stress promotes transcription. GlcNAcylation at Ser-113 promotes monoubiquitination of Lys-121. It fluctuates in response to extracellular glucose, and associates with transcribed genes. In terms of processing, ADP-ribosylated by PARP1 or PARP2 on Ser-7 (H2BS6ADPr) in response to DNA damage. H2BS6ADPr promotes recruitment of CHD1L. Mono-ADP-ribosylated on Glu-3 (H2BE2ADPr) by PARP3 in response to single-strand breaks. Poly ADP-ribosylation on Glu-36 (H2BE35ADPr) by PARP1 regulates adipogenesis: it inhibits phosphorylation at Ser-37 (H2BS36ph), thereby blocking expression of pro-adipogenetic genes. Post-translationally, crotonylation (Kcr) is specifically present in male germ cells and marks testis-specific genes in post-meiotic cells, including X-linked genes that escape sex chromosome inactivation in haploid cells. Crotonylation marks active promoters and enhancers and confers resistance to transcriptional repressors. It is also associated with post-meiotically activated genes on autosomes. Hydroxybutyrylation of histones is induced by starvation. In terms of processing, lactylated in macrophages by EP300/P300 by using lactoyl-CoA directly derived from endogenous or exogenous lactate, leading to stimulates gene transcription.

Its subcellular location is the nucleus. The protein resides in the chromosome. In terms of biological role, core component of nucleosome. Nucleosomes wrap and compact DNA into chromatin, limiting DNA accessibility to the cellular machineries which require DNA as a template. Histones thereby play a central role in transcription regulation, DNA repair, DNA replication and chromosomal stability. DNA accessibility is regulated via a complex set of post-translational modifications of histones, also called histone code, and nucleosome remodeling. The protein is Histone H2B type 1-K of Mus musculus (Mouse).